Reading from the N-terminus, the 88-residue chain is Large ribosomal subunit protein bL31 (88 aa).

The tract at residues 67-88 is disordered; it reads MGSVDNATSEKKSATDETSKES. Over residues 74 to 88 the composition is skewed to basic and acidic residues; that stretch reads TSEKKSATDETSKES.

The protein belongs to the bacterial ribosomal protein bL31 family. Type A subfamily. As to quaternary structure, part of the 50S ribosomal subunit.

Binds the 23S rRNA. The chain is Large ribosomal subunit protein bL31 from Synechococcus sp. (strain CC9311).